The primary structure comprises 276 residues: Urease accessory protein UreD (276 aa).

It belongs to the UreD family. UreD, UreF and UreG form a complex that acts as a GTP-hydrolysis-dependent molecular chaperone, activating the urease apoprotein by helping to assemble the nickel containing metallocenter of UreC. The UreE protein probably delivers the nickel.

The protein resides in the cytoplasm. Functionally, required for maturation of urease via the functional incorporation of the urease nickel metallocenter. The chain is Urease accessory protein UreD from Variovorax paradoxus (strain S110).